A 160-amino-acid polypeptide reads, in one-letter code: Transcription elongation factor GreA (160 aa).

Residues 14 to 38 (IKAELASLKKERPEVIKAIAEAREE) are a coiled coil.

Belongs to the GreA/GreB family.

Necessary for efficient RNA polymerase transcription elongation past template-encoded arresting sites. The arresting sites in DNA have the property of trapping a certain fraction of elongating RNA polymerases that pass through, resulting in locked ternary complexes. Cleavage of the nascent transcript by cleavage factors such as GreA or GreB allows the resumption of elongation from the new 3'terminus. GreA releases sequences of 2 to 3 nucleotides. This chain is Transcription elongation factor GreA, found in Maridesulfovibrio salexigens (strain ATCC 14822 / DSM 2638 / NCIMB 8403 / VKM B-1763) (Desulfovibrio salexigens).